Here is a 153-residue protein sequence, read N- to C-terminus: Endoribonuclease YbeY (153 aa).

Positions 114, 118, and 124 each coordinate Zn(2+).

Belongs to the endoribonuclease YbeY family. It depends on Zn(2+) as a cofactor.

Its subcellular location is the cytoplasm. Its function is as follows. Single strand-specific metallo-endoribonuclease involved in late-stage 70S ribosome quality control and in maturation of the 3' terminus of the 16S rRNA. The protein is Endoribonuclease YbeY of Shewanella sp. (strain MR-4).